The following is a 310-amino-acid chain: Putative S-adenosyl-L-methionine-dependent methyltransferase MMAR_0356 (310 aa).

S-adenosyl-L-methionine is bound by residues D137 and 166 to 167 (DL).

It belongs to the UPF0677 family.

Exhibits S-adenosyl-L-methionine-dependent methyltransferase activity. This chain is Putative S-adenosyl-L-methionine-dependent methyltransferase MMAR_0356, found in Mycobacterium marinum (strain ATCC BAA-535 / M).